The following is a 196-amino-acid chain: Peptidyl-tRNA hydrolase (196 aa).

Tyrosine 19 provides a ligand contact to tRNA. Histidine 24 (proton acceptor) is an active-site residue. Residues tyrosine 68, asparagine 70, and asparagine 116 each contribute to the tRNA site.

Belongs to the PTH family. In terms of assembly, monomer.

Its subcellular location is the cytoplasm. It carries out the reaction an N-acyl-L-alpha-aminoacyl-tRNA + H2O = an N-acyl-L-amino acid + a tRNA + H(+). Functionally, hydrolyzes ribosome-free peptidyl-tRNAs (with 1 or more amino acids incorporated), which drop off the ribosome during protein synthesis, or as a result of ribosome stalling. In terms of biological role, catalyzes the release of premature peptidyl moieties from peptidyl-tRNA molecules trapped in stalled 50S ribosomal subunits, and thus maintains levels of free tRNAs and 50S ribosomes. This Aromatoleum aromaticum (strain DSM 19018 / LMG 30748 / EbN1) (Azoarcus sp. (strain EbN1)) protein is Peptidyl-tRNA hydrolase.